The following is a 429-amino-acid chain: Adenylosuccinate synthetase (429 aa).

Residues 12-18 (GDEGKGK) and 40-42 (GHT) each bind GTP. D13 (proton acceptor) is an active-site residue. Mg(2+)-binding residues include D13 and G40. IMP contacts are provided by residues 13 to 16 (DEGK), 38 to 41 (NAGH), T129, R143, Q223, T238, and R302. H41 functions as the Proton donor in the catalytic mechanism. Residue 298–304 (VVTGRKR) coordinates substrate. GTP-binding positions include R304, 330 to 332 (KLD), and 412 to 414 (STS).

This sequence belongs to the adenylosuccinate synthetase family. Homodimer. The cofactor is Mg(2+).

The protein resides in the cytoplasm. The catalysed reaction is IMP + L-aspartate + GTP = N(6)-(1,2-dicarboxyethyl)-AMP + GDP + phosphate + 2 H(+). It functions in the pathway purine metabolism; AMP biosynthesis via de novo pathway; AMP from IMP: step 1/2. Functionally, plays an important role in the de novo pathway of purine nucleotide biosynthesis. Catalyzes the first committed step in the biosynthesis of AMP from IMP. This is Adenylosuccinate synthetase from Maricaulis maris (strain MCS10) (Caulobacter maris).